The primary structure comprises 206 residues: Guanylate kinase (206 aa).

A Guanylate kinase-like domain is found at 5–184 (GMLIVLSGPS…AAERIKAIIR (180 aa)). 12–19 (GPSGVGKG) serves as a coordination point for ATP.

The protein belongs to the guanylate kinase family.

The protein resides in the cytoplasm. The catalysed reaction is GMP + ATP = GDP + ADP. Essential for recycling GMP and indirectly, cGMP. The polypeptide is Guanylate kinase (Lactiplantibacillus plantarum (strain ATCC BAA-793 / NCIMB 8826 / WCFS1) (Lactobacillus plantarum)).